Here is a 263-residue protein sequence, read N- to C-terminus: Ribosomal RNA large subunit methyltransferase E (263 aa).

The tract at residues 1-34 (MSSAEGPKSGGGSKGSKSEASSRVRGSAPTGSRD) is disordered. Positions 102, 104, 126, 142, and 166 each coordinate S-adenosyl-L-methionine. Catalysis depends on lysine 206, which acts as the Proton acceptor.

The protein belongs to the class I-like SAM-binding methyltransferase superfamily. RNA methyltransferase RlmE family.

The protein localises to the cytoplasm. It carries out the reaction uridine(2552) in 23S rRNA + S-adenosyl-L-methionine = 2'-O-methyluridine(2552) in 23S rRNA + S-adenosyl-L-homocysteine + H(+). Functionally, specifically methylates the uridine in position 2552 of 23S rRNA at the 2'-O position of the ribose in the fully assembled 50S ribosomal subunit. This is Ribosomal RNA large subunit methyltransferase E from Rhodospirillum rubrum (strain ATCC 11170 / ATH 1.1.1 / DSM 467 / LMG 4362 / NCIMB 8255 / S1).